A 428-amino-acid chain; its full sequence is Adenylosuccinate synthetase (428 aa).

GTP-binding positions include 12–18 (GDEGKGK) and 40–42 (GHT). Catalysis depends on aspartate 13, which acts as the Proton acceptor. Aspartate 13 and glycine 40 together coordinate Mg(2+). IMP is bound by residues 13–16 (DEGK), 38–41 (NAGH), threonine 130, arginine 144, glutamine 225, threonine 240, and arginine 304. Catalysis depends on histidine 41, which acts as the Proton donor. 300–306 (VTTGRSR) lines the substrate pocket. GTP contacts are provided by residues arginine 306, 332 to 334 (KID), and 414 to 416 (GVG).

The protein belongs to the adenylosuccinate synthetase family. Homodimer. Requires Mg(2+) as cofactor.

It localises to the cytoplasm. The enzyme catalyses IMP + L-aspartate + GTP = N(6)-(1,2-dicarboxyethyl)-AMP + GDP + phosphate + 2 H(+). Its pathway is purine metabolism; AMP biosynthesis via de novo pathway; AMP from IMP: step 1/2. Plays an important role in the de novo pathway of purine nucleotide biosynthesis. Catalyzes the first committed step in the biosynthesis of AMP from IMP. The chain is Adenylosuccinate synthetase from Clostridium botulinum (strain Eklund 17B / Type B).